A 108-amino-acid polypeptide reads, in one-letter code: Iron-sulfur cluster assembly protein CyaY (108 aa).

Belongs to the frataxin family.

Involved in iron-sulfur (Fe-S) cluster assembly. May act as a regulator of Fe-S biogenesis. This chain is Iron-sulfur cluster assembly protein CyaY, found in Burkholderia cenocepacia (strain ATCC BAA-245 / DSM 16553 / LMG 16656 / NCTC 13227 / J2315 / CF5610) (Burkholderia cepacia (strain J2315)).